The sequence spans 206 residues: High frequency lysogenization protein HflD homolog (206 aa).

Belongs to the HflD family.

It localises to the cytoplasm. It is found in the cell inner membrane. The sequence is that of High frequency lysogenization protein HflD homolog from Marinobacter nauticus (strain ATCC 700491 / DSM 11845 / VT8) (Marinobacter aquaeolei).